The following is an 87-amino-acid chain: Translation initiation factor IF-1 2 (87 aa).

The S1-like domain occupies 1–72; that stretch reads MAKEELLELD…TKGRINFRHK (72 aa).

Belongs to the IF-1 family. As to quaternary structure, component of the 30S ribosomal translation pre-initiation complex which assembles on the 30S ribosome in the order IF-2 and IF-3, IF-1 and N-formylmethionyl-tRNA(fMet); mRNA recruitment can occur at any time during PIC assembly.

The protein localises to the cytoplasm. Functionally, one of the essential components for the initiation of protein synthesis. Stabilizes the binding of IF-2 and IF-3 on the 30S subunit to which N-formylmethionyl-tRNA(fMet) subsequently binds. Helps modulate mRNA selection, yielding the 30S pre-initiation complex (PIC). Upon addition of the 50S ribosomal subunit IF-1, IF-2 and IF-3 are released leaving the mature 70S translation initiation complex. The polypeptide is Translation initiation factor IF-1 2 (Burkholderia vietnamiensis (strain G4 / LMG 22486) (Burkholderia cepacia (strain R1808))).